The following is a 74-amino-acid chain: Exodeoxyribonuclease 7 small subunit (74 aa).

It belongs to the XseB family. As to quaternary structure, heterooligomer composed of large and small subunits.

It localises to the cytoplasm. It catalyses the reaction Exonucleolytic cleavage in either 5'- to 3'- or 3'- to 5'-direction to yield nucleoside 5'-phosphates.. Functionally, bidirectionally degrades single-stranded DNA into large acid-insoluble oligonucleotides, which are then degraded further into small acid-soluble oligonucleotides. The chain is Exodeoxyribonuclease 7 small subunit from Synechococcus elongatus (strain ATCC 33912 / PCC 7942 / FACHB-805) (Anacystis nidulans R2).